Here is a 537-residue protein sequence, read N- to C-terminus: MAKQIIFGEKVRVSLKKGVDTLANTVRVTLGPKGHPVALERKWGAPTVIDDGVTIARDIELPDAFENMGAQLVKEAATRTSDAAGDGTTTSIVLAQALINEAFKNIAAGAEPINLKRGIEKAVAALKAQLRKNSTPVKGKQQIVQVATITGKDPEIGNLIADVMDKVGKDGVITIEESRGLRYETSYVEGMQFDRGYISAYFVTDPGRMESIMEDATILMTDRKIETVAELLPALEKILQISKNLVIVAENVEAEALATLVVNKLRGNLNILAVKAPGYGDRQKAMLEDMAILTGGHVISKEAGRKLDSVTEADLGHARRVVSNKDKTTIIDGEGSAEAIKNRIKQIKAQIEETESAFDREKLQERQAALVGGVAVIAVGAATETEMKERKARVEDALAATRAAIEEGILPGGGTGLLNALPCLDALKLEGDEATGVSIVRKALIEPVRWIATNAGKDGNVIVDKVKNSPVGHGYNAEKDVFGDMAEMGIIDPTMVVRSALENASSIANMVLITDSLVADIQDKNPAPPMPEAPGMY.

Residues 29–32 (TLGP), 86–90 (DGTTT), Gly-413, and Asp-492 contribute to the ATP site.

Belongs to the chaperonin (HSP60) family. As to quaternary structure, forms a cylinder of 14 subunits composed of two heptameric rings stacked back-to-back. Interacts with the co-chaperonin GroES.

The protein localises to the cytoplasm. The catalysed reaction is ATP + H2O + a folded polypeptide = ADP + phosphate + an unfolded polypeptide.. Together with its co-chaperonin GroES, plays an essential role in assisting protein folding. The GroEL-GroES system forms a nano-cage that allows encapsulation of the non-native substrate proteins and provides a physical environment optimized to promote and accelerate protein folding. In Dehalococcoides mccartyi (strain ATCC BAA-2266 / KCTC 15142 / 195) (Dehalococcoides ethenogenes (strain 195)), this protein is Chaperonin GroEL.